The following is a 210-amino-acid chain: UPF0502 protein Sama_1967 (210 aa).

The protein belongs to the UPF0502 family.

In Shewanella amazonensis (strain ATCC BAA-1098 / SB2B), this protein is UPF0502 protein Sama_1967.